The primary structure comprises 68 residues: Small ribosomal subunit protein eS17 (68 aa).

Belongs to the eukaryotic ribosomal protein eS17 family.

This is Small ribosomal subunit protein eS17 from Staphylothermus marinus (strain ATCC 43588 / DSM 3639 / JCM 9404 / F1).